The following is a 407-amino-acid chain: Serine/threonine transporter SstT (407 aa).

Transmembrane regions (helical) follow at residues 12 to 32, 42 to 62, 81 to 101, 141 to 161, 179 to 199, 218 to 238, 245 to 267, 288 to 308, and 330 to 350; these read GNLI…GISS, LGIL…FILI, IIIL…LANF, ALSS…GIAL, VLKI…GLVA, ILLV…IVFF, FPLI…SSAA, ISIP…IAIL, and IIAT…LLLI.

It belongs to the dicarboxylate/amino acid:cation symporter (DAACS) (TC 2.A.23) family.

The protein localises to the cell inner membrane. The enzyme catalyses L-serine(in) + Na(+)(in) = L-serine(out) + Na(+)(out). It carries out the reaction L-threonine(in) + Na(+)(in) = L-threonine(out) + Na(+)(out). Its function is as follows. Involved in the import of serine and threonine into the cell, with the concomitant import of sodium (symport system). The chain is Serine/threonine transporter SstT from Campylobacter jejuni subsp. jejuni serotype O:6 (strain 81116 / NCTC 11828).